The primary structure comprises 308 residues: Serine/threonine-protein phosphatase PP1 (308 aa).

The Mn(2+) site is built by D64, H66, D92, and N124. The Proton donor role is filled by H125. Positions 173 and 248 each coordinate Mn(2+).

This sequence belongs to the PPP phosphatase family. PP-1 subfamily. Mn(2+) is required as a cofactor.

It is found in the cytoplasm. The enzyme catalyses O-phospho-L-seryl-[protein] + H2O = L-seryl-[protein] + phosphate. The catalysed reaction is O-phospho-L-threonyl-[protein] + H2O = L-threonyl-[protein] + phosphate. The sequence is that of Serine/threonine-protein phosphatase PP1 (pph-3) from Neurospora crassa (strain ATCC 24698 / 74-OR23-1A / CBS 708.71 / DSM 1257 / FGSC 987).